The chain runs to 148 residues: Lysozyme C (148 aa).

Positions 1–18 (MKALIILGLVLLSVTVQG) are cleaved as a signal peptide. Residues 19–148 (KIFERCELAR…VSQYVKGCGV (130 aa)) enclose the C-type lysozyme domain. 4 disulfides stabilise this stretch: C24-C146, C48-C134, C83-C99, and C95-C113. Active-site residues include E53 and D71.

Belongs to the glycosyl hydrolase 22 family. Monomer.

It is found in the secreted. It carries out the reaction Hydrolysis of (1-&gt;4)-beta-linkages between N-acetylmuramic acid and N-acetyl-D-glucosamine residues in a peptidoglycan and between N-acetyl-D-glucosamine residues in chitodextrins.. Functionally, lysozymes have primarily a bacteriolytic function; those in tissues and body fluids are associated with the monocyte-macrophage system and enhance the activity of immunoagents. This is Lysozyme C (LYZ) from Nasalis larvatus (Proboscis monkey).